A 602-amino-acid chain; its full sequence is Glutamyl-tRNA(Gln) amidotransferase subunit B, mitochondrial (602 aa).

Residues 1–56 (MFRSCLRHCRRATVRSRTCPRCSHHEIPQLQVVQRQISLSSSFPHIRRLQTSSTDT) constitute a mitochondrion transit peptide.

Belongs to the GatB/GatE family. GatB subfamily. As to quaternary structure, subunit of the heterotrimeric GatCAB amidotransferase (AdT) complex, composed of A, B and C subunits.

The protein localises to the mitochondrion. The enzyme catalyses L-glutamyl-tRNA(Gln) + L-glutamine + ATP + H2O = L-glutaminyl-tRNA(Gln) + L-glutamate + ADP + phosphate + H(+). In terms of biological role, allows the formation of correctly charged Gln-tRNA(Gln) through the transamidation of misacylated Glu-tRNA(Gln) in the mitochondria. The reaction takes place in the presence of glutamine and ATP through an activated gamma-phospho-Glu-tRNA(Gln). The chain is Glutamyl-tRNA(Gln) amidotransferase subunit B, mitochondrial (nempA) from Emericella nidulans (strain FGSC A4 / ATCC 38163 / CBS 112.46 / NRRL 194 / M139) (Aspergillus nidulans).